An 88-amino-acid chain; its full sequence is U1-hexatoxin-Iw1d (88 aa).

The signal sequence occupies residues 1–17 (LKFVVLICLVIMASTSA). Gln18 is subject to Pyrrolidone carboxylic acid. Intrachain disulfides connect Cys20–Cys31, Cys25–Cys39, Cys30–Cys65, Cys49–Cys73, and Cys67–Cys80. Residues 86 to 88 (RSE) constitute a propeptide that is removed on maturation.

The protein belongs to the MIT-like AcTx family. As to expression, expressed by the venom gland.

Its subcellular location is the secreted. The sequence is that of U1-hexatoxin-Iw1d from Illawarra wisharti (Illawarra funnel-web spider).